Reading from the N-terminus, the 180-residue chain is Probable Brix domain-containing ribosomal biogenesis protein (180 aa).

Residues Met1–Arg178 form the Brix domain.

In terms of biological role, probably involved in the biogenesis of the ribosome. This is Probable Brix domain-containing ribosomal biogenesis protein from Aeropyrum pernix (strain ATCC 700893 / DSM 11879 / JCM 9820 / NBRC 100138 / K1).